The sequence spans 145 residues: uncharacterized protein (145 aa).

It is found in the mitochondrion. This is an uncharacterized protein from Arabidopsis thaliana (Mouse-ear cress).